Here is a 501-residue protein sequence, read N- to C-terminus: Glycerol kinase (501 aa).

Residue T17 participates in ADP binding. The ATP site is built by T17, T18, and S19. T17 lines the sn-glycerol 3-phosphate pocket. R21 lines the ADP pocket. R87, E88, Y139, and D243 together coordinate sn-glycerol 3-phosphate. Glycerol is bound by residues R87, E88, Y139, D243, and Q244. Positions 265 and 308 each coordinate ADP. Residues T265, G308, Q312, and G409 each contribute to the ATP site. Residues G409 and N413 each coordinate ADP.

It belongs to the FGGY kinase family.

The enzyme catalyses glycerol + ATP = sn-glycerol 3-phosphate + ADP + H(+). Its pathway is polyol metabolism; glycerol degradation via glycerol kinase pathway; sn-glycerol 3-phosphate from glycerol: step 1/1. Its activity is regulated as follows. Inhibited by fructose 1,6-bisphosphate (FBP). Functionally, key enzyme in the regulation of glycerol uptake and metabolism. Catalyzes the phosphorylation of glycerol to yield sn-glycerol 3-phosphate. This Pseudomonas syringae pv. tomato (strain ATCC BAA-871 / DC3000) protein is Glycerol kinase.